Reading from the N-terminus, the 216-residue chain is 3-isopropylmalate dehydratase small subunit (216 aa).

The protein belongs to the LeuD family. LeuD type 1 subfamily. As to quaternary structure, heterodimer of LeuC and LeuD.

It carries out the reaction (2R,3S)-3-isopropylmalate = (2S)-2-isopropylmalate. The protein operates within amino-acid biosynthesis; L-leucine biosynthesis; L-leucine from 3-methyl-2-oxobutanoate: step 2/4. Catalyzes the isomerization between 2-isopropylmalate and 3-isopropylmalate, via the formation of 2-isopropylmaleate. The polypeptide is 3-isopropylmalate dehydratase small subunit (Burkholderia ambifaria (strain MC40-6)).